Consider the following 338-residue polypeptide: Penicillin V acylase (338 aa).

A propeptide spans 1–3 (MLG) (removed in mature form). Catalysis depends on C4, which acts as the Nucleophile.

This sequence belongs to the peptidase C59 family. As to quaternary structure, homotetramer. Expressed as an inactive precursor that is cleaved autocatalytically at Gly-3/Cys-4 to generate an active enzyme. Processing exposes a catalytic N-terminal nucleophile residue with a free alpha amino group.

The enzyme catalyses a penicillin + H2O = 6-aminopenicillanate + a carboxylate. Its activity is regulated as follows. Hydrolase activity is rapidly inhibited by lysine modifying reagents. Its function is as follows. Catalyzes the hydrolysis of penicillin V to 6-aminopenicillanate (6-APA). Exhibits high specificity for penicillin V. Penicillin G and other related compounds are hydrolyzed at less than 10% of the rate of penicillin V. Among the cephalosporins, cephalosporin C is resistant to cleavage, whereas cephalosporin G is cleaved at about 1% of the rate of cleavage of penicillin V. The sequence is that of Penicillin V acylase from Lysinibacillus sphaericus (Bacillus sphaericus).